The following is a 235-amino-acid chain: Elongation factor Tu, chloroplastic (235 aa).

The region spanning 1 to 125 is the tr-type G domain; it reads KNMITGAAQM…SVDSYIPTPI (125 aa). 47-50 contributes to the GTP binding site; that stretch reads NKED.

Belongs to the TRAFAC class translation factor GTPase superfamily. Classic translation factor GTPase family. EF-Tu/EF-1A subfamily.

It is found in the plastid. It localises to the chloroplast. The enzyme catalyses GTP + H2O = GDP + phosphate + H(+). In terms of biological role, GTP hydrolase that promotes the GTP-dependent binding of aminoacyl-tRNA to the A-site of ribosomes during protein biosynthesis. This Costaria costata (Five-ribbed kelp) protein is Elongation factor Tu, chloroplastic (tufA).